The chain runs to 206 residues: dITP/XTP pyrophosphatase (206 aa).

Residue 10-15 coordinates substrate; the sequence is SRNAKK. Catalysis depends on D75, which acts as the Proton acceptor. D75 contributes to the Mg(2+) binding site. Substrate-binding positions include S76, 158–161, K181, and 186–187; these read FGYD and HR.

The protein belongs to the HAM1 NTPase family. Homodimer. Mg(2+) serves as cofactor.

The catalysed reaction is XTP + H2O = XMP + diphosphate + H(+). It catalyses the reaction dITP + H2O = dIMP + diphosphate + H(+). It carries out the reaction ITP + H2O = IMP + diphosphate + H(+). In terms of biological role, pyrophosphatase that catalyzes the hydrolysis of nucleoside triphosphates to their monophosphate derivatives, with a high preference for the non-canonical purine nucleotides XTP (xanthosine triphosphate), dITP (deoxyinosine triphosphate) and ITP. Seems to function as a house-cleaning enzyme that removes non-canonical purine nucleotides from the nucleotide pool, thus preventing their incorporation into DNA/RNA and avoiding chromosomal lesions. This is dITP/XTP pyrophosphatase from Nocardia farcinica (strain IFM 10152).